Consider the following 275-residue polypeptide: Photosystem II extrinsic protein O (275 aa).

Positions 1–28 (MRFRTLLIAFLALCLGLITACSEGPANA) are cleaved as a signal peptide.

This sequence belongs to the PsbO family. In terms of assembly, PSII is composed of 1 copy each of membrane proteins PsbA, PsbB, PsbC, PsbD, PsbE, PsbF, PsbH, PsbI, PsbJ, PsbK, PsbL, PsbM, PsbT, PsbX, PsbY, PsbZ, Psb30/Ycf12, peripheral proteins PsbO, CyanoQ (PsbQ), PsbU, PsbV and a large number of cofactors. It forms dimeric complexes.

It localises to the cellular thylakoid membrane. In terms of biological role, one of the extrinsic, lumenal subunits of photosystem II (PSII), which stabilize and protect the oxygen-evolving complex. PSII is a light-driven water plastoquinone oxidoreductase, using light energy to abstract electrons from H(2)O, generating a proton gradient subsequently used for ATP formation. Required for dimerization of PSII and for binding of PsbQ to PSII. The sequence is that of Photosystem II extrinsic protein O from Crocosphaera subtropica (strain ATCC 51142 / BH68) (Cyanothece sp. (strain ATCC 51142)).